The following is an 87-amino-acid chain: Small ribosomal subunit protein bS20 (87 aa).

The segment covering 1–11 (MANIKSAKKRA) has biased composition (basic residues). The segment at 1-27 (MANIKSAKKRAVQSEKRRQHNASQRSM) is disordered.

This sequence belongs to the bacterial ribosomal protein bS20 family.

Functionally, binds directly to 16S ribosomal RNA. In Actinobacillus succinogenes (strain ATCC 55618 / DSM 22257 / CCUG 43843 / 130Z), this protein is Small ribosomal subunit protein bS20.